The sequence spans 109 residues: Peptide chaperone MftB (109 aa).

Belongs to the peptide chaperone MftB family.

Functionally, peptide chaperone involved in the biosynthesis of the enzyme cofactor mycofactocin (MFT). Binds MftA and MftC with high affinity, and is essential for MftC activity on MftA, likely via the formation of a ternary complex. The sequence is that of Peptide chaperone MftB from Mycobacterium tuberculosis (strain ATCC 25618 / H37Rv).